The primary structure comprises 204 residues: Urease accessory protein UreG (204 aa).

13–20 (GPVGSGKT) provides a ligand contact to GTP.

This sequence belongs to the SIMIBI class G3E GTPase family. UreG subfamily. Homodimer. UreD, UreF and UreG form a complex that acts as a GTP-hydrolysis-dependent molecular chaperone, activating the urease apoprotein by helping to assemble the nickel containing metallocenter of UreC. The UreE protein probably delivers the nickel.

Its subcellular location is the cytoplasm. Functionally, facilitates the functional incorporation of the urease nickel metallocenter. This process requires GTP hydrolysis, probably effectuated by UreG. The chain is Urease accessory protein UreG from Acinetobacter baylyi (strain ATCC 33305 / BD413 / ADP1).